A 345-amino-acid polypeptide reads, in one-letter code: Biotin synthase (345 aa).

Residues 38–256 enclose the Radical SAM core domain; sequence RQVQVSTLLS…IAVARIMMPS (219 aa). [4Fe-4S] cluster contacts are provided by Cys53, Cys57, and Cys60. Residues Cys97, Cys128, Cys188, and Arg260 each coordinate [2Fe-2S] cluster.

It belongs to the radical SAM superfamily. Biotin synthase family. Homodimer. Requires [4Fe-4S] cluster as cofactor. It depends on [2Fe-2S] cluster as a cofactor.

It catalyses the reaction (4R,5S)-dethiobiotin + (sulfur carrier)-SH + 2 reduced [2Fe-2S]-[ferredoxin] + 2 S-adenosyl-L-methionine = (sulfur carrier)-H + biotin + 2 5'-deoxyadenosine + 2 L-methionine + 2 oxidized [2Fe-2S]-[ferredoxin]. Its pathway is cofactor biosynthesis; biotin biosynthesis; biotin from 7,8-diaminononanoate: step 2/2. Its function is as follows. Catalyzes the conversion of dethiobiotin (DTB) to biotin by the insertion of a sulfur atom into dethiobiotin via a radical-based mechanism. This chain is Biotin synthase, found in Yersinia pestis bv. Antiqua (strain Antiqua).